Consider the following 183-residue polypeptide: ATP synthase subunit b, chloroplastic (183 aa).

The helical transmembrane segment at 20–42 (INTNVFETNIINLAIVVGTLFYY) threads the bilayer.

This sequence belongs to the ATPase B chain family. As to quaternary structure, F-type ATPases have 2 components, F(1) - the catalytic core - and F(0) - the membrane proton channel. F(1) has five subunits: alpha(3), beta(3), gamma(1), delta(1), epsilon(1). F(0) has four main subunits: a(1), b(1), b'(1) and c(10-14). The alpha and beta chains form an alternating ring which encloses part of the gamma chain. F(1) is attached to F(0) by a central stalk formed by the gamma and epsilon chains, while a peripheral stalk is formed by the delta, b and b' chains.

The protein resides in the plastid. The protein localises to the chloroplast thylakoid membrane. In terms of biological role, f(1)F(0) ATP synthase produces ATP from ADP in the presence of a proton or sodium gradient. F-type ATPases consist of two structural domains, F(1) containing the extramembraneous catalytic core and F(0) containing the membrane proton channel, linked together by a central stalk and a peripheral stalk. During catalysis, ATP synthesis in the catalytic domain of F(1) is coupled via a rotary mechanism of the central stalk subunits to proton translocation. Functionally, component of the F(0) channel, it forms part of the peripheral stalk, linking F(1) to F(0). This chain is ATP synthase subunit b, chloroplastic, found in Euglena gracilis.